A 139-amino-acid chain; its full sequence is Large-conductance mechanosensitive channel (139 aa).

A run of 2 helical transmembrane segments spans residues valine 14–leucine 34 and glycine 86–isoleucine 106.

Belongs to the MscL family. As to quaternary structure, homopentamer.

The protein localises to the cell inner membrane. Functionally, channel that opens in response to stretch forces in the membrane lipid bilayer. May participate in the regulation of osmotic pressure changes within the cell. The polypeptide is Large-conductance mechanosensitive channel (Methylobacillus flagellatus (strain ATCC 51484 / DSM 6875 / VKM B-1610 / KT)).